We begin with the raw amino-acid sequence, 384 residues long: N-acetyldiaminopimelate deacetylase (384 aa).

Aspartate 75 is a catalytic residue. Glutamate 134 serves as the catalytic Proton acceptor.

The protein belongs to the peptidase M20A family. N-acetyldiaminopimelate deacetylase subfamily.

It catalyses the reaction N-acetyl-(2S,6S)-2,6-diaminopimelate + H2O = (2S,6S)-2,6-diaminopimelate + acetate. The protein operates within amino-acid biosynthesis; L-lysine biosynthesis via DAP pathway; LL-2,6-diaminopimelate from (S)-tetrahydrodipicolinate (acetylase route): step 3/3. In terms of biological role, catalyzes the conversion of N-acetyl-diaminopimelate to diaminopimelate and acetate. The sequence is that of N-acetyldiaminopimelate deacetylase from Lactobacillus helveticus (strain DPC 4571).